Here is a 270-residue protein sequence, read N- to C-terminus: Formamidopyrimidine-DNA glycosylase (270 aa).

Catalysis depends on Pro2, which acts as the Schiff-base intermediate with DNA. Glu3 (proton donor) is an active-site residue. Lys58 functions as the Proton donor; for beta-elimination activity in the catalytic mechanism. DNA contacts are provided by His91, Arg109, and Arg151. An FPG-type zinc finger spans residues 236–270 (QVYGKTGQQCPSCETPLKAVKLAARASVYCPECQS). The Proton donor; for delta-elimination activity role is filled by Arg260.

It belongs to the FPG family. In terms of assembly, monomer. It depends on Zn(2+) as a cofactor.

The catalysed reaction is Hydrolysis of DNA containing ring-opened 7-methylguanine residues, releasing 2,6-diamino-4-hydroxy-5-(N-methyl)formamidopyrimidine.. It catalyses the reaction 2'-deoxyribonucleotide-(2'-deoxyribose 5'-phosphate)-2'-deoxyribonucleotide-DNA = a 3'-end 2'-deoxyribonucleotide-(2,3-dehydro-2,3-deoxyribose 5'-phosphate)-DNA + a 5'-end 5'-phospho-2'-deoxyribonucleoside-DNA + H(+). Functionally, involved in base excision repair of DNA damaged by oxidation or by mutagenic agents. Acts as a DNA glycosylase that recognizes and removes damaged bases. Has a preference for oxidized purines, such as 7,8-dihydro-8-oxoguanine (8-oxoG). Has AP (apurinic/apyrimidinic) lyase activity and introduces nicks in the DNA strand. Cleaves the DNA backbone by beta-delta elimination to generate a single-strand break at the site of the removed base with both 3'- and 5'-phosphates. The polypeptide is Formamidopyrimidine-DNA glycosylase (Psychromonas ingrahamii (strain DSM 17664 / CCUG 51855 / 37)).